Reading from the N-terminus, the 590-residue chain is (+)-sabinene synthase, chloroplastic (590 aa).

The N-terminal 51 residues, 1–51 (MSSISINIAMPLNSLHNFERKPSKAWSTSCTAPAARLRASSSLQQEKPHQI), are a transit peptide targeting the chloroplast. Mg(2+) contacts are provided by aspartate 343, aspartate 347, aspartate 487, threonine 491, and glutamate 495. The DDXXD motif signature appears at 343–347 (DDVYD).

This sequence belongs to the terpene synthase family. As to quaternary structure, monomer. Mg(2+) serves as cofactor.

It is found in the plastid. The protein localises to the chloroplast. The enzyme catalyses (2E)-geranyl diphosphate = (1R,5R)-sabinene + diphosphate. Its pathway is terpene metabolism; sabinene hydrate biosynthesis. Its function is as follows. Catalyzes the formation of the (-)-3-isothujone precursor sabinene from geranyl diphosphate. The enzyme also produces significant amounts of gamma-terpinene, terpinolene and limonene. The protein is (+)-sabinene synthase, chloroplastic of Salvia officinalis (Sage).